The sequence spans 246 residues: Probable transcriptional regulatory protein YebC (246 aa).

Positions 1 to 20 are disordered; sequence MAGHSKWANTRHRKAAQDAK.

The protein belongs to the TACO1 family.

It is found in the cytoplasm. The chain is Probable transcriptional regulatory protein YebC from Salmonella typhimurium (strain LT2 / SGSC1412 / ATCC 700720).